A 307-amino-acid polypeptide reads, in one-letter code: Aspartate carbamoyltransferase catalytic subunit (307 aa).

2 residues coordinate carbamoyl phosphate: Arg-56 and Thr-57. Lys-84 provides a ligand contact to L-aspartate. Residues Arg-106, His-136, and Gln-139 each coordinate carbamoyl phosphate. Arg-169 and Arg-221 together coordinate L-aspartate. Positions 262 and 263 each coordinate carbamoyl phosphate.

The protein belongs to the aspartate/ornithine carbamoyltransferase superfamily. ATCase family. In terms of assembly, heterododecamer (2C3:3R2) of six catalytic PyrB chains organized as two trimers (C3), and six regulatory PyrI chains organized as three dimers (R2).

It carries out the reaction carbamoyl phosphate + L-aspartate = N-carbamoyl-L-aspartate + phosphate + H(+). Its pathway is pyrimidine metabolism; UMP biosynthesis via de novo pathway; (S)-dihydroorotate from bicarbonate: step 2/3. Functionally, catalyzes the condensation of carbamoyl phosphate and aspartate to form carbamoyl aspartate and inorganic phosphate, the committed step in the de novo pyrimidine nucleotide biosynthesis pathway. The protein is Aspartate carbamoyltransferase catalytic subunit of Streptococcus pneumoniae serotype 2 (strain D39 / NCTC 7466).